The sequence spans 136 residues: Histone H3 (136 aa).

A disordered region spans residues 1-43 (MARTKQTARKSTGGKAPRKQLASKAARKAAPSTGGVKKPHRYK). Lys-5 carries the post-translational modification N6,N6,N6-trimethyllysine; alternate. Lys-5 is subject to N6,N6-dimethyllysine; alternate. Residues Lys-5 and Lys-10 each carry the N6-methyllysine; alternate modification. Lys-10 is subject to N6-acetyllysine; alternate. Ser-11 carries the post-translational modification Phosphoserine. Lys-15 bears the N6,N6-dimethyllysine; alternate mark. Lys-15, Lys-19, Lys-24, Lys-28, and Lys-37 each carry N6-acetyllysine; alternate. Lys-19, Lys-24, Lys-28, and Lys-37 each carry N6-methyllysine; alternate. 2 positions are modified to N6,N6,N6-trimethyllysine; alternate: Lys-28 and Lys-37. Lys-28 and Lys-37 each carry N6,N6-dimethyllysine; alternate. An N6-acetyllysine mark is found at Lys-57 and Lys-65. Lys-80 carries the post-translational modification N6,N6,N6-trimethyllysine; alternate. Lys-80 is modified (N6,N6-dimethyllysine; alternate). Position 80 is an N6-methyllysine; alternate (Lys-80).

It belongs to the histone H3 family. In terms of assembly, the nucleosome is a histone octamer containing two molecules each of H2A, H2B, H3 and H4 assembled in one H3-H4 heterotetramer and two H2A-H2B heterodimers. The octamer wraps approximately 147 bp of DNA. Post-translationally, phosphorylated to form H3S10ph. H3S10ph promotes subsequent H3K14ac formation and is required for transcriptional activation through TBP recruitment to the promoters. Mono-, di- and trimethylated by the COMPASS complex to form H3K4me1/2/3. H3K4me activates gene expression by regulating transcription elongation and plays a role in telomere length maintenance. H3K4me enrichment correlates with transcription levels, and occurs in a 5' to 3' gradient with H3K4me3 enrichment at the 5'-end of genes, shifting to H3K4me2 and then H3K4me1. Methylated by set2 to form H3K36me. H3K36me represses gene expression. Methylated by dot1 to form H3K79me. H3K79me is required for association of SIR proteins with telomeric regions and for telomeric silencing. The COMPASS-mediated formation of H3K4me2/3 and the dot1-mediated formation of H3K79me require H2BK123ub1. In terms of processing, acetylation of histone H3 leads to transcriptional activation. H3K14ac formation by gcn5 is promoted by H3S10ph. H3K14ac can also be formed by esa1. H3K56ac formation occurs predominantly in newly synthesized H3 molecules during G1, S and G2/M of the cell cycle and may be involved in DNA repair.

The protein resides in the nucleus. The protein localises to the chromosome. Core component of nucleosome. Nucleosomes wrap and compact DNA into chromatin, limiting DNA accessibility to the cellular machineries which require DNA as a template. Histones thereby play a central role in transcription regulation, DNA repair, DNA replication and chromosomal stability. DNA accessibility is regulated via a complex set of post-translational modifications of histones, also called histone code, and nucleosome remodeling. This is Histone H3 (hht1) from Neosartorya fischeri (strain ATCC 1020 / DSM 3700 / CBS 544.65 / FGSC A1164 / JCM 1740 / NRRL 181 / WB 181) (Aspergillus fischerianus).